A 355-amino-acid polypeptide reads, in one-letter code: MTIPATRLDQIANRFAELEARMASGTLEGEEFVQASRDYAELEPVAKVAAEVKAMREEIGGLEEMLADPEMKAMAQEELAAIREALPEKERQLAIAMLPKDSADNKPAMLEIRAGTGGDEAALFAGDLYRMYERFAGEQGWKVEPVSMNASEVGGFKEIVANVSGTGVFAKLKFESGVHRVQRVPETESGGRIHTSAATVAVLPEPDEVDVQIDDKDLKIDIYRASGAGGQHVNTTDSAVRITHLPTGIVVQQQDERSQHKNKAKAMQVLRTRLYDHLREQSQGEEAAARKAMVGSGDRSERIRTYNFPQGRVTDHRIGLTLHKLDEIIAGPGLGELVGALIAEDEAKRLAALSE.

N5-methylglutamine is present on Q231.

This sequence belongs to the prokaryotic/mitochondrial release factor family. Post-translationally, methylated by PrmC. Methylation increases the termination efficiency of RF1.

The protein localises to the cytoplasm. In terms of biological role, peptide chain release factor 1 directs the termination of translation in response to the peptide chain termination codons UAG and UAA. The polypeptide is Peptide chain release factor 1 (Erythrobacter litoralis (strain HTCC2594)).